A 195-amino-acid polypeptide reads, in one-letter code: MPYGTRYPTLAFHTGGVGESDDGMPPQPFETFCYDSALLQAKIENFNIVPYTSVLPKELFGNILPVDQCTKFFKHGAVLEVIMAGRGATVTDGTQAIATGVGICWGKDKNGELIRGWAAEYVEFFPTWIDDEIAESHAKMWLKKSLQHELDLRSISKHSEFQYFHNYINIRKKFGFCLTALGFLNFENAAPAVIQ.

The residue at position 53 (Ser53) is a Pyruvic acid (Ser).

The protein belongs to the pyruvoyl-dependent arginine decarboxylase family. In terms of assembly, trimer of an alpha-beta dimer. It depends on pyruvate as a cofactor.

The protein localises to the cytoplasm. It catalyses the reaction L-arginine + H(+) = agmatine + CO2. Functionally, part of the AaxABC system, catalyzes the decarboxylation of L-arginine. The arginine uptake by the bacterium in the macrophage may be a virulence factor against the host innate immune response. The protein is Pyruvoyl-dependent arginine decarboxylase AaxB (aaxB) of Chlamydia trachomatis serovar D (strain ATCC VR-885 / DSM 19411 / UW-3/Cx).